A 161-amino-acid polypeptide reads, in one-letter code: Ureidoglycolate lyase (161 aa).

Belongs to the ureidoglycolate lyase family. Homodimer. The cofactor is Ni(2+).

The enzyme catalyses (S)-ureidoglycolate = urea + glyoxylate. The protein operates within nitrogen metabolism; (S)-allantoin degradation. Functionally, catalyzes the catabolism of the allantoin degradation intermediate (S)-ureidoglycolate, generating urea and glyoxylate. Involved in the utilization of allantoin as nitrogen source. In Rhodobacter capsulatus (strain ATCC BAA-309 / NBRC 16581 / SB1003), this protein is Ureidoglycolate lyase.